The primary structure comprises 2116 residues: Unconventional myosin-VIIb (2116 aa).

In terms of domain architecture, Myosin motor spans 65-760; the sequence is QGVDDMIRLG…QDTLLEVQRS (696 aa). Residue 158 to 165 coordinates ATP; sequence GESGAGKT. An actin-binding region spans residues 637 to 659; the sequence is LDQLMKILTNCQPYFIRCIKPNE. IQ domains lie at 745 to 765, 763 to 792, 786 to 815, 814 to 834, 832 to 861, and 855 to 884; these read IFLR…VLDR, LDRA…AAVT, QRRA…GFER, ERLQ…AMRQ, MRQR…AVVV, and KRRA…NAPL. A Phosphoserine modification is found at serine 904. The segment at 916 to 1542 is mediates interaction with ANKS4B; that stretch reads EKVFGFLPAM…KKQGLLASEN (627 aa). A MyTH4 1 domain is found at 989 to 1192; that stretch reads HIRRPLRYPL…PTWLELQAVK (204 aa). Residues 1197 to 1506 form the FERM 1 domain; sequence IPIQVILATG…EGLKERSIFA (310 aa). At serine 1371 the chain carries Phosphoserine. Residues 1501 to 1567 form the SH3 domain; it reads ERSIFAMALQ…PMACLYTIPT (67 aa). Residues 1501–2116 form a mediates interaction with CDHR2, CDHR5 and USH1C region; that stretch reads ERSIFAMALQ…GSKAPALAST (616 aa). MyTH4 domains are found at residues 1644–1793 and 1790–1896; these read YSCE…EAAE and EAAE…KLWL. A Phosphoserine modification is found at serine 1645. An FERM 2 domain is found at 1799–2102; that stretch reads ICHKIYFPND…SYVQQLLSAM (304 aa).

This sequence belongs to the TRAFAC class myosin-kinesin ATPase superfamily. Myosin family. As to quaternary structure, part of the IMAC/intermicrovillar adhesion complex/intermicrovillar tip-link complex composed of ANKS4B, MYO7B, USH1C, CDHR2 and CDHR5. Interacts with CDHR2. Interacts with CDHR5. Interacts with USH1C. Interacts with ANKS4B; requires initial interaction with USH1C. Interacts with CALML4; the interaction mediates the association of CALML4 with the IMAC/intermicrovillar adhesion complex.

It is found in the cytoplasm. The protein localises to the cytoskeleton. The protein resides in the cell projection. It localises to the microvillus. In terms of biological role, myosins are actin-based motor molecules with ATPase activity. Their highly divergent tails are presumed to bind to membranous compartments, which would be moved relative to actin filaments. As part of the intermicrovillar adhesion complex/IMAC plays a role in epithelial brush border differentiation, controlling microvilli organization and length. May link the complex to the actin core bundle of microvilli. The sequence is that of Unconventional myosin-VIIb from Homo sapiens (Human).